Reading from the N-terminus, the 344-residue chain is Selenide, water dikinase (344 aa).

The active site involves cysteine 15. ATP is bound by residues lysine 18 and 46 to 48 (TKD). Aspartate 49 provides a ligand contact to Mg(2+). Residues aspartate 66, aspartate 89, and 137–139 (GHS) each bind ATP. A Mg(2+)-binding site is contributed by aspartate 89. Aspartate 225 serves as a coordination point for Mg(2+).

Belongs to the selenophosphate synthase 1 family. Class I subfamily. As to quaternary structure, homodimer. Mg(2+) serves as cofactor.

The enzyme catalyses hydrogenselenide + ATP + H2O = selenophosphate + AMP + phosphate + 2 H(+). Synthesizes selenophosphate from selenide and ATP. In Colwellia psychrerythraea (strain 34H / ATCC BAA-681) (Vibrio psychroerythus), this protein is Selenide, water dikinase.